Consider the following 180-residue polypeptide: Transcription repressor NadR (180 aa).

As to quaternary structure, homodimer.

In terms of biological role, in the presence of nicotinic acid represses transcription of the nadBCA and nifS-nadR operons. Also binds to DNA upstream of the niaP gene, probably regulating it as well. May bind nicotinic acid. This chain is Transcription repressor NadR (nadR), found in Bacillus subtilis (strain 168).